Consider the following 223-residue polypeptide: Putative thymidylate synthase (223 aa).

Cysteine 146 is a catalytic residue.

Belongs to the thymidylate synthase family. Archaeal-type ThyA subfamily. Monomer.

The protein localises to the cytoplasm. It participates in pyrimidine metabolism; dTTP biosynthesis. May catalyze the biosynthesis of dTMP using an unknown cosubstrate. In vitro, also catalyzes the dehalogenation of 5-bromo-deoxyuridine monophosphate (Br-dUMP) and the tritium exchange of [5-3H]deoxyuridine monophosphate ([5-3H]dUMP). The polypeptide is Putative thymidylate synthase (thyA) (Methanothermobacter marburgensis (strain ATCC BAA-927 / DSM 2133 / JCM 14651 / NBRC 100331 / OCM 82 / Marburg) (Methanobacterium thermoautotrophicum)).